Reading from the N-terminus, the 362-residue chain is DNA replication and repair protein RecF (362 aa).

31 to 38 (GDNAAGKT) lines the ATP pocket.

The protein belongs to the RecF family.

It localises to the cytoplasm. The RecF protein is involved in DNA metabolism; it is required for DNA replication and normal SOS inducibility. RecF binds preferentially to single-stranded, linear DNA. It also seems to bind ATP. This Hydrogenovibrio crunogenus (strain DSM 25203 / XCL-2) (Thiomicrospira crunogena) protein is DNA replication and repair protein RecF.